Here is a 784-residue protein sequence, read N- to C-terminus: Lon protease (784 aa).

The region spanning 11–204 (IPVLPLRDVV…YLMAMMESEI (194 aa)) is the Lon N-terminal domain. 356 to 363 (GPPGVGKT) provides a ligand contact to ATP. Positions 592-773 (ENRVGQVTGL…EEVLTLALQN (182 aa)) constitute a Lon proteolytic domain. Residues serine 679 and lysine 722 contribute to the active site.

This sequence belongs to the peptidase S16 family. Homohexamer. Organized in a ring with a central cavity. ATP binding and hydrolysis do not affect the oligomeric state of the enzyme.

The protein resides in the cytoplasm. It carries out the reaction Hydrolysis of proteins in presence of ATP.. Contains an allosteric site (distinct from its active site), whose occupancy by an unfolded polypeptide leads to enzyme activation. Its function is as follows. ATP-dependent serine protease that mediates the selective degradation of mutant and abnormal proteins as well as certain short-lived regulatory proteins. Required for cellular homeostasis and for survival from DNA damage and developmental changes induced by stress. Degrades polypeptides processively to yield small peptide fragments that are 5 to 10 amino acids long. Binds to DNA in a double-stranded, site-specific manner. Endogenous substrates include the regulatory proteins RcsA and SulA, the transcriptional activator SoxS, and UmuD. Its overproduction specifically inhibits translation through at least two different pathways, one of them being the YoeB-YefM toxin-antitoxin system. This is Lon protease from Escherichia coli O6:H1 (strain CFT073 / ATCC 700928 / UPEC).